A 297-amino-acid chain; its full sequence is Halorhodopsin (297 aa).

The disordered stretch occupies residues 1–31 (MRSRTYHDQSVCGPYGSQRTDCDRDTDAGSD). Residues 1-45 (MRSRTYHDQSVCGPYGSQRTDCDRDTDAGSDTDVHGAQVATQIRT) are Extracellular-facing. Residues 46–71 (DTLLHSSLWVNIALAGLSILVFLYMA) form a helical membrane-spanning segment. Residues 72–77 (RTVRAN) lie on the Cytoplasmic side of the membrane. A helical membrane pass occupies residues 78 to 101 (RARLIVGATLMIPLVSLSSYLGLV). The Extracellular segment spans residues 102–125 (TGLTAGPIEMPAAHALAGEDVLSQ). The chain crosses the membrane as a helical span at residues 126 to 147 (WGRYLTWTLSTPMILLALGWLA). Topologically, residues 148–150 (EVD) are cytoplasmic. The chain crosses the membrane as a helical span at residues 151-174 (TADLFVVIAADIGMCLTGLAAALT). Topologically, residues 175 to 177 (TSS) are extracellular. Residues 178–200 (YAFRWAFYLVSTAFFVVVLYALL) form a helical membrane-spanning segment. The Cytoplasmic portion of the chain corresponds to 201 to 212 (AKWPTNAEAAGT). The chain crosses the membrane as a helical span at residues 213–236 (GDIFGTLRWLTVILWLGYPILWAL). The Extracellular segment spans residues 237 to 246 (GVEGFALVDS). Residues 247 to 275 (VGLTSWGYSLLDIGAKYLFAALLLRWVAN) form a helical membrane-spanning segment. At Lys262 the chain carries N6-(retinylidene)lysine. The Cytoplasmic segment spans residues 276–297 (NERTIAVGQRSGRGAIGDPVED).

This sequence belongs to the archaeal/bacterial/fungal opsin family.

The protein localises to the cell membrane. Its function is as follows. Light-driven chloride pump. The sequence is that of Halorhodopsin (hop) from Haloterrigena sp. (strain arg-4).